Reading from the N-terminus, the 281-residue chain is Clc-like protein 5 (281 aa).

The next 4 helical transmembrane spans lie at 13–33 (LATL…TITP), 104–124 (VLIL…AVIF), 137–157 (IMLD…LIVF), and 184–204 (YYLA…AALV).

This sequence belongs to the Clc family.

The protein localises to the membrane. This is Clc-like protein 5 (clc-5) from Caenorhabditis elegans.